A 334-amino-acid chain; its full sequence is HTH-type transcriptional repressor PurR (334 aa).

Residues 2-56 enclose the HTH lacI-type domain; the sequence is ATIKDVAKMAGVSTTTVSHVINKTRHVADETKQTVLDAIKALNYSPSAVARSLKV. The segment at residues 4–23 is a DNA-binding region (H-T-H motif); that stretch reads IKDVAKMAGVSTTTVSHVIN. Residues 48 to 56 mediate DNA binding; it reads SAVARSLKV. Residues Tyr73, Lys189, Thr191, Phe220, and Asp274 each contribute to the hypoxanthine site.

Homodimer.

Its pathway is purine metabolism; purine nucleotide biosynthesis [regulation]. Functionally, is the main repressor of the genes involved in the de novo synthesis of purine nucleotides, regulating purB, purC, purEK, purF, purHD, purL, purMN and guaBA expression. PurR is allosterically activated to bind its cognate DNA by binding the purine corepressors, hypoxanthine or guanine, thereby effecting transcription repression. In Mannheimia succiniciproducens (strain KCTC 0769BP / MBEL55E), this protein is HTH-type transcriptional repressor PurR.